Consider the following 239-residue polypeptide: Fumarate reductase iron-sulfur subunit (239 aa).

Positions 5-95 constitute a 2Fe-2S ferredoxin-type domain; it reads LTIRVFKYDP…DGVITLLPLP (91 aa). Residues C57, C62, C65, and C77 each contribute to the [2Fe-2S] cluster site. In terms of domain architecture, 4Fe-4S ferredoxin-type spans 142 to 171; the sequence is AQEVFELDRCIECGCCIAACGTKIMREDFV. [4Fe-4S] cluster-binding residues include C151, C154, and C157. C161, C208, and C214 together coordinate [3Fe-4S] cluster. Position 218 (C218) interacts with [4Fe-4S] cluster.

It belongs to the succinate dehydrogenase/fumarate reductase iron-sulfur protein family. Part of an enzyme complex containing three subunits: a flavoprotein (frdA), an iron-sulfur protein (frdB), and diheme cytochrome b (frdC). Requires [2Fe-2S] cluster as cofactor. [3Fe-4S] cluster serves as cofactor. The cofactor is [4Fe-4S] cluster.

Its subcellular location is the cell inner membrane. The enzyme catalyses a menaquinone + succinate = a menaquinol + fumarate. Its function is as follows. The fumarate reductase enzyme complex is required for fumarate respiration using formate or sulfide as electron donor. The chain is Fumarate reductase iron-sulfur subunit (frdB) from Wolinella succinogenes (strain ATCC 29543 / DSM 1740 / CCUG 13145 / JCM 31913 / LMG 7466 / NCTC 11488 / FDC 602W) (Vibrio succinogenes).